The sequence spans 388 residues: Succinate--CoA ligase [ADP-forming] subunit beta (388 aa).

Residues 9-244 (KEILRKFGVA…PDEEDPKETQ (236 aa)) enclose the ATP-grasp domain. Residues Lys46, 53–55 (GRG), Glu99, Cys102, and Glu107 contribute to the ATP site. Positions 199 and 213 each coordinate Mg(2+). Residues Asn264 and 321–323 (GIM) each bind substrate.

The protein belongs to the succinate/malate CoA ligase beta subunit family. As to quaternary structure, heterotetramer of two alpha and two beta subunits. It depends on Mg(2+) as a cofactor.

It carries out the reaction succinate + ATP + CoA = succinyl-CoA + ADP + phosphate. It catalyses the reaction GTP + succinate + CoA = succinyl-CoA + GDP + phosphate. Its pathway is carbohydrate metabolism; tricarboxylic acid cycle; succinate from succinyl-CoA (ligase route): step 1/1. Functionally, succinyl-CoA synthetase functions in the citric acid cycle (TCA), coupling the hydrolysis of succinyl-CoA to the synthesis of either ATP or GTP and thus represents the only step of substrate-level phosphorylation in the TCA. The beta subunit provides nucleotide specificity of the enzyme and binds the substrate succinate, while the binding sites for coenzyme A and phosphate are found in the alpha subunit. This chain is Succinate--CoA ligase [ADP-forming] subunit beta, found in Anaeromyxobacter dehalogenans (strain 2CP-C).